Reading from the N-terminus, the 709-residue chain is ATP-dependent zinc metalloprotease FtsH (709 aa).

Over 1-25 the chain is Cytoplasmic; that stretch reads MKKNKGLNEATTSEKPQFPKRTAWK. Residues 26–46 traverse the membrane as a helical segment; the sequence is IFWWVVILAIIIGILVYILMP. Residues 47 to 171 are Extracellular-facing; that stretch reads RATTAVIEKW…FVAPDTRARD (125 aa). The chain crosses the membrane as a helical span at residues 172–192; it reads VLNIFFGLLPIIIFVIFFLLF. Residues 193-709 lie on the Cytoplasmic side of the membrane; that stretch reads WRSARGISGG…DTEKDSETNS (517 aa). 268-275 is a binding site for ATP; it reads GPPGTGKT. H490 provides a ligand contact to Zn(2+). The active site involves E491. The Zn(2+) site is built by H494 and D569. Residues 673 to 709 form a disordered region; sequence ILAQKQEQQAKQKAEAKEAKLNKKTEKDTEKDSETNS. Basic and acidic residues predominate over residues 680–709; that stretch reads QQAKQKAEAKEAKLNKKTEKDTEKDSETNS.

The protein in the central section; belongs to the AAA ATPase family. It in the C-terminal section; belongs to the peptidase M41 family. As to quaternary structure, homohexamer. Requires Zn(2+) as cofactor.

It is found in the cell membrane. Acts as a processive, ATP-dependent zinc metallopeptidase for both cytoplasmic and membrane proteins. Plays a role in the quality control of integral membrane proteins. This Mycoplasma pneumoniae (strain ATCC 29342 / M129 / Subtype 1) (Mycoplasmoides pneumoniae) protein is ATP-dependent zinc metalloprotease FtsH.